Consider the following 504-residue polypeptide: CDK5 regulatory subunit-associated protein 3 (504 aa).

Short sequence motifs (shuffled ATG8-binding motif) lie at residues Ile266–Gly269, Ile290–Gly293, and Ile308–Gly311. Positions Trp268 to Val504 are required for interaction with UFL1 and mediates interaction with CHEK1. Residues Asp353–Glu368 form an RPL10a-binding domain (RBD) region. Lys448 participates in a covalent cross-link: Glycyl lysine isopeptide (Lys-Gly) (interchain with G-Cter in SUMO2).

The protein belongs to the CDK5RAP3 family. In terms of assembly, substrate adapter component of the UFM1 ribosome E3 ligase (UREL) complex, composed of UFL1, DDRGK1 and CDK5RAP3. Interaction with UFL1 anchors CDK5RAP3 in the cytoplasm, preventing its translocation to the nucleus which allows expression of the CCND1 cyclin and progression of cells through the G1/S transition. Interacts with ATG8 family proteins MAP1LC3A, MAP1LC3B, GABARAP, GABARAPL1 and GABARAPL2. Interacts with CDK5R1; competes with CDK5RAP1 and CDK5RAP2. Interacts with RELA. Interacts with CHEK1; may negatively regulate CHEK1 and thereby stimulate entry into mitosis. Interacts with CDKN2A/ARF and MDM2; forms a ternary complex involved in regulation of p53/TP53. Interacts with MAPK14. Interacts with CCNB1. Interacts with TUBG1; may regulate CDK5RAP3 in mitotic G2/M transition checkpoint. May be phosphorylated by CDK5. Post-translationally, ubiquitinated. Probably triggers proteasomal degradation and is negatively regulated by UFL1. In terms of processing, may be ufmylated. Cleaved by caspases early during apoptosis, the resulting peptides may play a role in rupture of the nuclear envelope. As to expression, expressed in vascular endothelium. Up-regulated in failing heart. Highly expressed in the ventricular section in subacute and chronic ischemic heart failure.

The protein localises to the endoplasmic reticulum membrane. It is found in the cytoplasm. The protein resides in the nucleus. Its subcellular location is the cytoskeleton. It localises to the microtubule organizing center. The protein localises to the centrosome. Functionally, substrate adapter of E3 ligase complexes mediating ufmylation, the covalent attachment of the ubiquitin-like modifier UFM1 to substrate proteins, and which is involved in various processes, such as ribosome recycling and reticulophagy (also called ER-phagy). As part of the UREL complex, plays a key role in ribosome recycling by promoting mono-ufmylation of RPL26/uL24 subunit of the 60S ribosome. Ufmylation of RPL26/uL24 occurs on free 60S ribosomes following ribosome dissociation: it weakens the junction between post-termination 60S subunits and SEC61 translocons, promoting release and recycling of the large ribosomal subunit from the endoplasmic reticulum membrane. Ufmylation of RPL26/uL24 and subsequent 60S ribosome recycling either take place after normal termination of translation or after ribosome stalling during cotranslational translocation at the endoplasmic reticulum. Within the UREL complex, CDK5RAP3 acts as a substrate adapter that constrains UFL1 ligase activity to mono-ufmylate RPL26/uL24 at 'Lys-134'. The UREL complex is also involved in reticulophagy in response to endoplasmic reticulum stress by promoting ufmylation of proteins such as CYB5R3, thereby promoting lysosomal degradation of ufmylated proteins. Also acts as a regulator of transcription: negatively regulates NF-kappa-B-mediated gene transcription through the control of RELA phosphorylation. Also regulates mitotic G2/M transition checkpoint and mitotic G2 DNA damage checkpoint. Through its interaction with CDKN2A/ARF and MDM2 may induce MDM2-dependent p53/TP53 ubiquitination, stabilization and activation in the nucleus, thereby promoting G1 cell cycle arrest and inhibition of cell proliferation. May also play a role in the rupture of the nuclear envelope during apoptosis. May regulate MAPK14 activity by regulating its dephosphorylation by PPM1D/WIP1. Required for liver development. The polypeptide is CDK5 regulatory subunit-associated protein 3 (Rattus norvegicus (Rat)).